The chain runs to 570 residues: MFS-type transporter ptmT (570 aa).

Positions 1 to 11 are enriched in polar residues; that stretch reads MPDSGNIQLDT. The tract at residues 1-34 is disordered; that stretch reads MPDSGNIQLDTLQHKDHSQETTSHYEGGSQLPEQ. 14 helical membrane-spanning segments follow: residues 50–70, 94–114, 121–141, 151–171, 182–202, 210–230, 247–267, 278–298, 323–343, 356–376, 379–399, 413–433, 445–465, and 517–537; these read GLIR…CVGL, WYVS…GKIY, WTYL…AITP, AISG…LSNI, AFIG…GGVF, WCFY…FLFM, GLDW…LLAL, NVRI…WLLI, IYTI…PIWF, IMNL…SVLI, VGYM…GAGL, IGYQ…PLLV, VATA…SAIA, and VTHT…GAFI. N-linked (GlcNAc...) asparagine glycosylation occurs at Asn541. Residues 550-570 are disordered; it reads PEPLVPGGSHSGAERDSKNGT. Basic and acidic residues predominate over residues 561–570; that stretch reads GAERDSKNGT.

Belongs to the major facilitator superfamily. TCR/Tet family.

Its subcellular location is the cell membrane. In terms of biological role, MFS-type transporter; part of the gene cluster that mediates the biosynthesis of the indole diterpenes penitrems. May be involved in the efflux of penitrems. The protein is MFS-type transporter ptmT of Penicillium ochrochloron.